The chain runs to 156 residues: Ribosomal RNA large subunit methyltransferase H (156 aa).

Residues L73, G104, and 123-128 (LSALTL) contribute to the S-adenosyl-L-methionine site.

This sequence belongs to the RNA methyltransferase RlmH family. Homodimer.

It localises to the cytoplasm. It carries out the reaction pseudouridine(1915) in 23S rRNA + S-adenosyl-L-methionine = N(3)-methylpseudouridine(1915) in 23S rRNA + S-adenosyl-L-homocysteine + H(+). Functionally, specifically methylates the pseudouridine at position 1915 (m3Psi1915) in 23S rRNA. The sequence is that of Ribosomal RNA large subunit methyltransferase H from Colwellia psychrerythraea (strain 34H / ATCC BAA-681) (Vibrio psychroerythus).